The sequence spans 506 residues: Dolichyl pyrophosphate Glc1Man9GlcNAc2 alpha-1,3-glucosyltransferase (506 aa).

12 consecutive transmembrane segments (helical) span residues 10–30 (RLLLWFFAVATAVKLLLIPSS), 101–121 (VIYFQRISVIVSDLCLLYGVY), 133–153 (NLICALVIWSPGLLIVDHIHF), 176–196 (LLGGFLFAVLLCFKHLFAVTA), 219–239 (LVTIGAVVVAVFAAAYGPFIY), 261–281 (YWAPNFWVFYIILDKGLAVLL), 305–325 (PFAVLPQITPLTTFAMVLLAI), 339–359 (GLVARWVAYAYTCGFLFGWHV), 384–401 (HYFLVSIVSCYSLYPLLY), 406–426 (YPIKVLLLLLHSVVMWLGFAA), 454–474 (YLMGLIIVEIVSQFLHPYFLG), and 479–499 (FLPLMLISTYCTVGIMYSWIW).

This sequence belongs to the ALG6/ALG8 glucosyltransferase family.

Its subcellular location is the endoplasmic reticulum membrane. It catalyses the reaction an alpha-D-Glc-(1-&gt;3)-alpha-D-Man-(1-&gt;2)-alpha-D-Man-(1-&gt;2)-alpha-D-Man-(1-&gt;3)-[alpha-D-Man-(1-&gt;2)-alpha-D-Man-(1-&gt;3)-[alpha-D-Man-(1-&gt;2)-alpha-D-Man-(1-&gt;6)]-alpha-D-Man-(1-&gt;6)]-beta-D-Man-(1-&gt;4)-beta-D-GlcNAc-(1-&gt;4)-alpha-D-GlcNAc-diphospho-di-trans,poly-cis-dolichol + a di-trans,poly-cis-dolichyl beta-D-glucosyl phosphate = an alpha-D-Glc-(1-&gt;3)-alpha-D-Glc-(1-&gt;3)-alpha-D-Man-(1-&gt;2)-alpha-D-Man-(1-&gt;2)-alpha-D-Man-(1-&gt;3)-[alpha-D-Man-(1-&gt;2)-alpha-D-Man-(1-&gt;3)-[alpha-D-Man-(1-&gt;2)-alpha-D-Man-(1-&gt;6)]-alpha-D-Man-(1-&gt;6)]-beta-D-Man-(1-&gt;4)-beta-D-GlcNAc-(1-&gt;4)-alpha-D-GlcNAc-diphospho-di-trans,poly-cis-dolichol + a di-trans,poly-cis-dolichyl phosphate + H(+). The protein operates within protein modification; protein glycosylation. Its function is as follows. Dolichyl pyrophosphate Glc1Man9GlcNAc2 alpha-1,3-glucosyltransferase that operates in the biosynthetic pathway of dolichol-linked oligosaccharides, the glycan precursors employed in protein asparagine (N)-glycosylation. The assembly of dolichol-linked oligosaccharides begins on the cytosolic side of the endoplasmic reticulum membrane and finishes in its lumen. The sequential addition of sugars to dolichol pyrophosphate produces dolichol-linked oligosaccharides containing fourteen sugars, including two GlcNAcs, nine mannoses and three glucoses. Once assembled, the oligosaccharide is transferred from the lipid to nascent proteins by oligosaccharyltransferases. In the lumen of the endoplasmic reticulum, adds the second glucose residue from dolichyl phosphate glucose (Dol-P-Glc) onto the lipid-linked oligosaccharide intermediate Glc(1)Man(9)GlcNAc(2)-PP-Dol to produce Glc(2)Man(9)GlcNAc(2)-PP-Dol. This Arabidopsis thaliana (Mouse-ear cress) protein is Dolichyl pyrophosphate Glc1Man9GlcNAc2 alpha-1,3-glucosyltransferase.